Here is an 84-residue protein sequence, read N- to C-terminus: Cell division topological specificity factor (84 aa).

The protein belongs to the MinE family.

Prevents the cell division inhibition by proteins MinC and MinD at internal division sites while permitting inhibition at polar sites. This ensures cell division at the proper site by restricting the formation of a division septum at the midpoint of the long axis of the cell. This Pseudomonas putida (strain W619) protein is Cell division topological specificity factor.